Consider the following 968-residue polypeptide: RNA polymerase-associated protein RapA (968 aa).

A Helicase ATP-binding domain is found at 164–334 (DVGRRHAPRV…FARLRLLDPN (171 aa)). 177–184 (DEVGLGKT) serves as a coordination point for ATP. The short motif at 280–283 (DEAH) is the DEAH box element. The Helicase C-terminal domain occupies 490 to 662 (RVEWLMGYLT…YLASPDETEG (173 aa)).

It belongs to the SNF2/RAD54 helicase family. RapA subfamily. Interacts with the RNAP. Has a higher affinity for the core RNAP than for the holoenzyme. Its ATPase activity is stimulated by binding to RNAP.

Functionally, transcription regulator that activates transcription by stimulating RNA polymerase (RNAP) recycling in case of stress conditions such as supercoiled DNA or high salt concentrations. Probably acts by releasing the RNAP, when it is trapped or immobilized on tightly supercoiled DNA. Does not activate transcription on linear DNA. Probably not involved in DNA repair. This Escherichia coli O81 (strain ED1a) protein is RNA polymerase-associated protein RapA.